Here is a 307-residue protein sequence, read N- to C-terminus: Secondary metabolism regulator LAE1 (307 aa).

This sequence belongs to the methyltransferase superfamily. LaeA methyltransferase family. Component of the heterotrimeric velvet complex composed of LAE1, VEL1 and VEL2; VEL1 acting as a bridging protein between LAE1 and VEL2.

It is found in the nucleus. The enzyme catalyses L-methionyl-[protein] + S-adenosyl-L-methionine = S-methyl-L-methionyl-[protein] + S-adenosyl-L-homocysteine. Its function is as follows. Methyltransferase that performs automethylation. No other methyl-accepting substrate has been identified yet. Component of the velvet transcription factor complex that acts as a global regulator for secondary metabolite gene expression. Controls the expression of the T-toxin gene cluster. Promotes oxidative stress tolerance and acts as a virulence factors during infection. Negatively regulate mycelial pigmentation and controls sexual development, as well as asexual development during vegetative growth. The protein is Secondary metabolism regulator LAE1 of Cochliobolus heterostrophus (strain C5 / ATCC 48332 / race O) (Southern corn leaf blight fungus).